The chain runs to 166 residues: Protein-export protein SecB (166 aa).

It belongs to the SecB family. In terms of assembly, homotetramer, a dimer of dimers. One homotetramer interacts with 1 SecA dimer.

The protein resides in the cytoplasm. One of the proteins required for the normal export of preproteins out of the cell cytoplasm. It is a molecular chaperone that binds to a subset of precursor proteins, maintaining them in a translocation-competent state. It also specifically binds to its receptor SecA. The protein is Protein-export protein SecB of Cereibacter sphaeroides (strain ATCC 17029 / ATH 2.4.9) (Rhodobacter sphaeroides).